The chain runs to 505 residues: GDP-Man:Man(3)GlcNAc(2)-PP-Dol alpha-1,2-mannosyltransferase (505 aa).

The Lumenal portion of the chain corresponds to 1–4 (MSTM). Residues 5–25 (LWVVVAAVLLFVLPVVRVPML) form a helical membrane-spanning segment. Residues 26-130 (DLTRRNIIRW…KWVDGSTWKH (105 aa)) lie on the Cytoplasmic side of the membrane. Positions 131–151 (LTLVGQAMGSMLLTIEALLRF) form an intramembrane region, helical. Over 152–374 (VPDIWLDTMG…FGINAMWNEH (223 aa)) the chain is Cytoplasmic. The helical intramembrane region spans 375-395 (FGIAVVEYAAAGLISLVHASA). Over 396-505 (GPLLDIIVPW…EHKTSRLGSN (110 aa)) the chain is Cytoplasmic.

The protein belongs to the glycosyltransferase group 1 family.

Its subcellular location is the endoplasmic reticulum membrane. The enzyme catalyses an alpha-D-Man-(1-&gt;3)-[alpha-D-Man-(1-&gt;6)]-beta-D-Man-(1-&gt;4)-beta-D-GlcNAc-(1-&gt;4)-alpha-D-GlcNAc-diphospho-di-trans,poly-cis-dolichol + 2 GDP-alpha-D-mannose = an alpha-D-Man-(1-&gt;2)-alpha-D-Man-(1-&gt;2)-alpha-D-Man-(1-&gt;3)-[alpha-D-Man-(1-&gt;6)]-beta-D-Man-(1-&gt;4)-beta-D-GlcNAc-(1-&gt;4)-alpha-D-GlcNAc-diphospho-di-trans,poly-cis-dolichol + 2 GDP + 2 H(+). It functions in the pathway protein modification; protein glycosylation. Functionally, GDP-Man:Man(3)GlcNAc(2)-PP-Dol alpha-1,2-mannosyltransferase that operates in the biosynthetic pathway of dolichol-linked oligosaccharides, the glycan precursors employed in protein asparagine (N)-glycosylation. The assembly of dolichol-linked oligosaccharides begins on the cytosolic side of the endoplasmic reticulum membrane and finishes in its lumen. The sequential addition of sugars to dolichol pyrophosphate produces dolichol-linked oligosaccharides containing fourteen sugars, including two GlcNAcs, nine mannoses and three glucoses. Once assembled, the oligosaccharide is transferred from the lipid to nascent proteins by oligosaccharyltransferases. Catalyzes, on the cytoplasmic face of the endoplasmic reticulum, the addition of the fourth and fifth mannose residues to the dolichol-linked oligosaccharide chain, to produce Man(5)GlcNAc(2)-PP-dolichol core oligosaccharide. This Candida glabrata (strain ATCC 2001 / BCRC 20586 / JCM 3761 / NBRC 0622 / NRRL Y-65 / CBS 138) (Yeast) protein is GDP-Man:Man(3)GlcNAc(2)-PP-Dol alpha-1,2-mannosyltransferase (ALG11).